The following is a 253-amino-acid chain: 5'-nucleotidase SurE (253 aa).

The a divalent metal cation site is built by aspartate 8, aspartate 9, serine 39, and asparagine 91.

This sequence belongs to the SurE nucleotidase family. Requires a divalent metal cation as cofactor.

The protein resides in the cytoplasm. The catalysed reaction is a ribonucleoside 5'-phosphate + H2O = a ribonucleoside + phosphate. Nucleotidase that shows phosphatase activity on nucleoside 5'-monophosphates. In Albidiferax ferrireducens (strain ATCC BAA-621 / DSM 15236 / T118) (Rhodoferax ferrireducens), this protein is 5'-nucleotidase SurE.